The primary structure comprises 258 residues: L-aspartate dehydrogenase 1 (258 aa).

NAD(+) contacts are provided by A121 and N181. Residue H211 is part of the active site.

This sequence belongs to the L-aspartate dehydrogenase family.

The catalysed reaction is L-aspartate + NADP(+) + H2O = oxaloacetate + NH4(+) + NADPH + H(+). It catalyses the reaction L-aspartate + NAD(+) + H2O = oxaloacetate + NH4(+) + NADH + H(+). It functions in the pathway cofactor biosynthesis; NAD(+) biosynthesis; iminoaspartate from L-aspartate (dehydrogenase route): step 1/1. Functionally, specifically catalyzes the NAD or NADP-dependent dehydrogenation of L-aspartate to iminoaspartate. The sequence is that of L-aspartate dehydrogenase 1 from Bordetella parapertussis (strain 12822 / ATCC BAA-587 / NCTC 13253).